Reading from the N-terminus, the 146-residue chain is U1 small nuclear ribonucleoprotein C (146 aa).

The Matrin-type zinc-finger motif lies at 4 to 36 (YYCDYCDTYLTHDSPSVRKTHCTGRKHRDNVKF). The tract at residues 64–96 (NNPFAGGPSSAPPKPSGVSIPPPNMGAPPRPGM) is disordered. Residues 73–96 (SAPPKPSGVSIPPPNMGAPPRPGM) show a composition bias toward pro residues.

The protein belongs to the U1 small nuclear ribonucleoprotein C family. U1 snRNP is composed of the 7 core Sm proteins B/B', D1, D2, D3, E, F and G that assemble in a heptameric protein ring on the Sm site of the small nuclear RNA to form the core snRNP, and at least 3 U1 snRNP-specific proteins U1-70K, U1-A and U1-C. U1-C interacts with U1 snRNA and the 5' splice-site region of the pre-mRNA.

The protein localises to the nucleus. Its function is as follows. Component of the spliceosomal U1 snRNP, which is essential for recognition of the pre-mRNA 5' splice-site and the subsequent assembly of the spliceosome. U1-C is directly involved in initial 5' splice-site recognition for both constitutive and regulated alternative splicing. The interaction with the 5' splice-site seems to precede base-pairing between the pre-mRNA and the U1 snRNA. Stimulates commitment or early (E) complex formation by stabilizing the base pairing of the 5' end of the U1 snRNA and the 5' splice-site region. The polypeptide is U1 small nuclear ribonucleoprotein C (Drosophila pseudoobscura pseudoobscura (Fruit fly)).